A 904-amino-acid polypeptide reads, in one-letter code: Envelope glycoprotein B (904 aa).

A signal peptide spans M1–A30. At A31 to P774 the chain is on the virion surface side. Residues P32–A52 are compositionally biased toward low complexity. A disordered region spans residues P32–A88. Residues N87 and N141 are each glycosylated (N-linked (GlcNAc...) asparagine; by host). 5 disulfides stabilise this stretch: C116/C573, C133/C529, C207/C271, C364/C412, and C596/C633. Involved in fusion and/or binding to host membrane regions lie at residues V173–Y179 and R258–Y265. N-linked (GlcNAc...) asparagine; by host glycosylation is found at N398 and N430. The disordered stretch occupies residues R470–V492. Residues P476–G485 are compositionally biased toward pro residues. N-linked (GlcNAc...) asparagine; by host glycosylation occurs at N489. N674 is a glycosylation site (N-linked (GlcNAc...) asparagine; by host). Positions I719–S772 are hydrophobic membrane proximal region. Residues F775 to F795 traverse the membrane as a helical segment. Residues R796 to L904 lie on the Intravirion side of the membrane. The Golgi targeting motif lies at Y849–L852. Residues K883–L904 form a disordered region. T887 bears the Phosphothreonine; by host mark. The short motif at Y889–V892 is the Internalization motif element.

The protein belongs to the herpesviridae glycoprotein B family. As to quaternary structure, homotrimer; disulfide-linked. Interacts with host receptor MYH9/NMMHC-IIA. Interacts with host receptor MYH10/NMMHC-IIB. Binds to heparan sulfate proteoglycans. Interacts with gH/gL heterodimer. Interacts with the host coreceptor PILRA. In terms of processing, the cytoplasmic tail is phosphorylated by the viral kinase US3. Phosphorylation may be linked to a down-regulation of gB expression on cell surface. Ubiquitinated.

The protein resides in the virion membrane. It localises to the host cell membrane. It is found in the host endosome membrane. The protein localises to the host Golgi apparatus membrane. Functionally, envelope glycoprotein that forms spikes at the surface of virion envelope and binds to the host cell entry receptors MYH9/NMMHC-IIA and MYH10/NMMHC-IIB, promoting the virus entry into host cells. Essential for the initial attachment to heparan sulfate moieties of the host cell surface proteoglycans. Involved in fusion of viral and cellular membranes leading to virus entry into the host cell: following initial binding to its host cell entry receptors, membrane fusion is mediated by the fusion machinery composed at least of gB and the heterodimer gH/gL. May be involved in the fusion between the virion envelope and the outer nuclear membrane during virion egress. Also plays a role, together with gK, in virus-induced cell-to-cell fusion (syncytia formation). This Human herpesvirus 1 (strain KOS) (HHV-1) protein is Envelope glycoprotein B.